Reading from the N-terminus, the 60-residue chain is Large ribosomal subunit protein bL32 (60 aa).

Disordered stretches follow at residues Met-1–Leu-22 and Gly-34–Ala-60. Basic residues predominate over residues Ser-9 to His-19.

This sequence belongs to the bacterial ribosomal protein bL32 family.

The sequence is that of Large ribosomal subunit protein bL32 from Variovorax paradoxus (strain S110).